The sequence spans 229 residues: Potassium/proton antiporter CemA (229 aa).

3 helical membrane passes run 7–27 (FTPLLYLVSIVFLPWWISLLF), 107–127 (ILHFSTNIICFIILSGYSILG), and 189–209 (IISGLVSTFPVILDTILKYWI).

The protein belongs to the CemA family.

Its subcellular location is the plastid. It localises to the chloroplast inner membrane. It catalyses the reaction K(+)(in) + H(+)(out) = K(+)(out) + H(+)(in). In terms of biological role, contributes to K(+)/H(+) antiport activity by supporting proton efflux to control proton extrusion and homeostasis in chloroplasts in a light-dependent manner to modulate photosynthesis. Prevents excessive induction of non-photochemical quenching (NPQ) under continuous-light conditions. Indirectly promotes efficient inorganic carbon uptake into chloroplasts. The protein is Potassium/proton antiporter CemA of Helianthus annuus (Common sunflower).